Reading from the N-terminus, the 270-residue chain is Putative pyruvate, phosphate dikinase regulatory protein (270 aa).

ADP is bound at residue Gly-148–Thr-155.

The protein belongs to the pyruvate, phosphate/water dikinase regulatory protein family. PDRP subfamily.

It catalyses the reaction N(tele)-phospho-L-histidyl/L-threonyl-[pyruvate, phosphate dikinase] + ADP = N(tele)-phospho-L-histidyl/O-phospho-L-threonyl-[pyruvate, phosphate dikinase] + AMP + H(+). The enzyme catalyses N(tele)-phospho-L-histidyl/O-phospho-L-threonyl-[pyruvate, phosphate dikinase] + phosphate + H(+) = N(tele)-phospho-L-histidyl/L-threonyl-[pyruvate, phosphate dikinase] + diphosphate. In terms of biological role, bifunctional serine/threonine kinase and phosphorylase involved in the regulation of the pyruvate, phosphate dikinase (PPDK) by catalyzing its phosphorylation/dephosphorylation. This chain is Putative pyruvate, phosphate dikinase regulatory protein, found in Bacillus cytotoxicus (strain DSM 22905 / CIP 110041 / 391-98 / NVH 391-98).